We begin with the raw amino-acid sequence, 439 residues long: Divalent metal cation transporter MntH (439 aa).

11 helical membrane passes run 32–52 (GASM…AYMD), 67–87 (GYAL…FQSL), 121–141 (IAAM…LSLL), 144–164 (MPLL…LLLE), 173–193 (LAIG…LFIT), 214–234 (ALLI…LFLH), 261–281 (VVVA…MAAG), 301–321 (APLL…ASGI), 350–370 (AVTM…TQAL), 371–391 (VLSQ…LLWF), and 406–426 (FIAV…AVLI).

The protein belongs to the NRAMP family.

It is found in the cell inner membrane. Its function is as follows. H(+)-stimulated, divalent metal cation uptake system. The sequence is that of Divalent metal cation transporter MntH from Verminephrobacter eiseniae (strain EF01-2).